The sequence spans 428 residues: G2/mitotic-specific cyclin-B (428 aa).

It belongs to the cyclin family. Cyclin AB subfamily. Interacts with the CDC2 protein kinase to form a serine/threonine kinase holoenzyme complex also known as maturation promoting factor (MPF). The cyclin subunit imparts substrate specificity to the complex.

Functionally, essential for the control of the cell cycle at the G2/M (mitosis) transition. The chain is G2/mitotic-specific cyclin-B from Spisula solidissima (Atlantic surf-clam).